The sequence spans 443 residues: Xaa-Pro dipeptidase (443 aa).

Residues Asp246, Asp257, His339, Glu384, and Glu423 each coordinate Mn(2+).

It belongs to the peptidase M24B family. Bacterial-type prolidase subfamily. It depends on Mn(2+) as a cofactor.

It carries out the reaction Xaa-L-Pro dipeptide + H2O = an L-alpha-amino acid + L-proline. Splits dipeptides with a prolyl residue in the C-terminal position. The chain is Xaa-Pro dipeptidase from Shigella flexneri.